We begin with the raw amino-acid sequence, 1042 residues long: V(D)J recombination-activating protein 1 (1042 aa).

Positions 40–52 (KTTEENQKEKNSS) are enriched in basic and acidic residues. Residues 40–80 (KTTEENQKEKNSSEGKPSLEQSPAVLDKASGQKPEVAPPAF) form a disordered region. A Glycyl lysine isopeptide (Lys-Gly) (interchain with G-Cter in ubiquitin) cross-link involves residue K233. The Zn(2+) site is built by C268, H272, C292, C295, H297, C307, H309, C312, C315, C327, C330, C357, C362, H374, and H378. The RING-type zinc finger occupies 292 to 331 (CQICEHILADPVETSCKHVFCRICILRCLKVMGSYCPSCQ). The RAG1-type zinc finger occupies 353–382 (LIVKCSAPECNEEVSLEKYNHHVSSHKESR). Residues 391 to 458 (GGRPRQHLLS…QADELEAIMQ (68 aa)) constitute a DNA-binding region (NBD). A divalent metal cation-binding residues include D602, D710, and E964.

It belongs to the RAG1 family. As to quaternary structure, homodimer. Component of the RAG complex composed of core components RAG1 and RAG2, and associated component HMGB1 or HMGB2. Interacts with DCAF1, leading to recruitment of the CUL4A-RBX1-DDB1-DCAF1/VPRBP complex to ubiquitinate proteins and limit error-prone repair during V(D)J recombination. The cofactor is Mg(2+). It depends on Mn(2+) as a cofactor. Autoubiquitinated in the presence of CDC34/UBCH3.

Its subcellular location is the nucleus. The catalysed reaction is S-ubiquitinyl-[E2 ubiquitin-conjugating enzyme]-L-cysteine + [acceptor protein]-L-lysine = [E2 ubiquitin-conjugating enzyme]-L-cysteine + N(6)-ubiquitinyl-[acceptor protein]-L-lysine.. Its function is as follows. Catalytic component of the RAG complex, a multiprotein complex that mediates the DNA cleavage phase during V(D)J recombination. V(D)J recombination assembles a diverse repertoire of immunoglobulin and T-cell receptor genes in developing B and T-lymphocytes through rearrangement of different V (variable), in some cases D (diversity), and J (joining) gene segments. In the RAG complex, RAG1 mediates the DNA-binding to the conserved recombination signal sequences (RSS) and catalyzes the DNA cleavage activities by introducing a double-strand break between the RSS and the adjacent coding segment. RAG2 is not a catalytic component but is required for all known catalytic activities. DNA cleavage occurs in 2 steps: a first nick is introduced in the top strand immediately upstream of the heptamer, generating a 3'-hydroxyl group that can attack the phosphodiester bond on the opposite strand in a direct transesterification reaction, thereby creating 4 DNA ends: 2 hairpin coding ends and 2 blunt, 5'-phosphorylated ends. The chromatin structure plays an essential role in the V(D)J recombination reactions and the presence of histone H3 trimethylated at 'Lys-4' (H3K4me3) stimulates both the nicking and haipinning steps. The RAG complex also plays a role in pre-B cell allelic exclusion, a process leading to expression of a single immunoglobulin heavy chain allele to enforce clonality and monospecific recognition by the B-cell antigen receptor (BCR) expressed on individual B-lymphocytes. The introduction of DNA breaks by the RAG complex on one immunoglobulin allele induces ATM-dependent repositioning of the other allele to pericentromeric heterochromatin, preventing accessibility to the RAG complex and recombination of the second allele. In addition to its endonuclease activity, RAG1 also acts as an E3 ubiquitin-protein ligase that mediates monoubiquitination of histone H3. Histone H3 monoubiquitination is required for the joining step of V(D)J recombination. Mediates polyubiquitination of KPNA1. The protein is V(D)J recombination-activating protein 1 (RAG1) of Oryctolagus cuniculus (Rabbit).